We begin with the raw amino-acid sequence, 743 residues long: Amylovoran biosynthesis protein AmsF (743 aa).

Residues 1-27 (MKRRELIRTAFSTIVATAALSSVSARA) form the signal peptide.

The protein to R.meliloti ExoP.

It localises to the periplasm. The protein operates within glycan metabolism; exopolysaccharide biosynthesis. Involved in the biosynthesis of amylovoran which functions as a virulence factor. May be involved in the polymerization or late modification of the repeating units. This Erwinia amylovora (Fire blight bacteria) protein is Amylovoran biosynthesis protein AmsF (amsF).